Consider the following 324-residue polypeptide: o-succinylbenzoate synthase (324 aa).

K135 (proton donor) is an active-site residue. Positions 163, 192, and 215 each coordinate Mg(2+). The active-site Proton acceptor is K237.

It belongs to the mandelate racemase/muconate lactonizing enzyme family. MenC type 1 subfamily. A divalent metal cation serves as cofactor.

The catalysed reaction is (1R,6R)-6-hydroxy-2-succinyl-cyclohexa-2,4-diene-1-carboxylate = 2-succinylbenzoate + H2O. Its pathway is quinol/quinone metabolism; 1,4-dihydroxy-2-naphthoate biosynthesis; 1,4-dihydroxy-2-naphthoate from chorismate: step 4/7. It participates in quinol/quinone metabolism; menaquinone biosynthesis. Functionally, converts 2-succinyl-6-hydroxy-2,4-cyclohexadiene-1-carboxylate (SHCHC) to 2-succinylbenzoate (OSB). The chain is o-succinylbenzoate synthase from Aliivibrio fischeri (strain MJ11) (Vibrio fischeri).